The sequence spans 244 residues: Phosphonates import ATP-binding protein PhnC (244 aa).

The 239-residue stretch at 6-244 (IECHNLETAY…LQAQFVVNSQ (239 aa)) folds into the ABC transporter domain. An ATP-binding site is contributed by 41 to 48 (GLNGAGKS).

This sequence belongs to the ABC transporter superfamily. Phosphonates importer (TC 3.A.1.9.1) family. As to quaternary structure, the complex is composed of two ATP-binding proteins (PhnC), two transmembrane proteins (PhnE) and a solute-binding protein (PhnD).

Its subcellular location is the cell inner membrane. The enzyme catalyses phosphonate(out) + ATP + H2O = phosphonate(in) + ADP + phosphate + H(+). Functionally, part of the ABC transporter complex PhnCDE involved in phosphonates import. Responsible for energy coupling to the transport system. The sequence is that of Phosphonates import ATP-binding protein PhnC from Trichormus variabilis (strain ATCC 29413 / PCC 7937) (Anabaena variabilis).